A 702-amino-acid polypeptide reads, in one-letter code: Cadmium, zinc and cobalt-transporting ATPase (702 aa).

Over 1–86 (MRLVKQEYVL…HIKKSADDGY (86 aa)) the chain is Cytoplasmic. An HMA domain is found at 4–72 (VKQEYVLDGL…KVKSIDPHVT (69 aa)). Cd(2+) contacts are provided by C15 and C18. 2 residues coordinate Co(2+): C15 and C18. Zn(2+) is bound by residues C15 and C18. Residues 87-107 (RNRMVNMLIRMAAAVILGAAA) traverse the membrane as a helical segment. The Extracellular portion of the chain corresponds to 108–116 (YLVQSGTIE). The chain crosses the membrane as a helical span at residues 117 to 136 (FFLFLGAYLIIGGDIIIRAV). At 137–143 (KNIIRGQ) the chain is on the cytoplasmic side. The helical transmembrane segment at 144-163 (VFDEHFLMALATIGAFLIQQ) threads the bilayer. Residues 164–166 (YPE) lie on the Extracellular side of the membrane. The helical transmembrane segment at 167-186 (GVAVMLFYQIGELFQGAAVS) threads the bilayer. At 187–320 (RSRKSISALM…ITKFAKYYTP (134 aa)) the chain is on the cytoplasmic side. The helical transmembrane segment at 321–339 (AVVIIAVLLAFVPPLVLSG) threads the bilayer. Residues 340–345 (AALSDW) lie on the Extracellular side of the membrane. A helical transmembrane segment spans residues 346–363 (VYRALIFLVISCPCALVV). Residues 364–648 (SIPLGFFGGI…AIRIAKRTRR (285 aa)) are Cytoplasmic-facing. D401 acts as the 4-aspartylphosphate intermediate in catalysis. The Mg(2+) site is built by D595 and D599. A helical membrane pass occupies residues 649–670 (IVWQNIGFALGVKAIFLILGAF). Topologically, residues 671-678 (GIATMWEA) are extracellular. The chain crosses the membrane as a helical span at residues 679–694 (VFSDVGVTLLAVANAM). The Cytoplasmic portion of the chain corresponds to 695 to 702 (RVMRLKNK).

Belongs to the cation transport ATPase (P-type) (TC 3.A.3) family. Type IB subfamily.

Its subcellular location is the cell membrane. The catalysed reaction is Zn(2+)(in) + ATP + H2O = Zn(2+)(out) + ADP + phosphate + H(+). It carries out the reaction Cd(2+)(in) + ATP + H2O = Cd(2+)(out) + ADP + phosphate + H(+). In terms of biological role, couples the hydrolysis of ATP with the transport of cadmium, zinc and cobalt out of the cell. Does not seem to transport copper. The protein is Cadmium, zinc and cobalt-transporting ATPase (cadA) of Bacillus subtilis (strain 168).